The chain runs to 437 residues: Oxysterol-binding protein homolog 7 (437 aa).

Over residues 23 to 32 (IASNAANSKP) the composition is skewed to polar residues. Residues 23–42 (IASNAANSKPSGADTDDIDE) form a disordered region. Positions 54 to 393 (IISQLKPGCD…EDLDYYIYKH (340 aa)) are OSBP-related domain (ORD). Residues 64-69 (LSRITL), 126-129 (KPLN), and 157-158 (HH) each bind a 1,2-diacyl-sn-glycero-3-phospho-(1D-myo-inositol 4-phosphate). Residues 64–69 (LSRITL) and asparagine 129 contribute to the a 1,2-diacyl-sn-glycero-3-phospho-L-serine site. Serine 183 lines the a 1,2-diacyl-sn-glycero-3-phospho-L-serine pocket. Residue lysine 276 forms a Glycyl lysine isopeptide (Lys-Gly) (interchain with G-Cter in ubiquitin) linkage. 3 residues coordinate a 1,2-diacyl-sn-glycero-3-phospho-(1D-myo-inositol 4-phosphate): lysine 351, glutamate 355, and arginine 359.

It belongs to the OSBP family. In terms of assembly, interacts with the AAA ATPase VPS4; regulates OSH7 membrane association. VPS4 is required for membrane dissociation of OSH7.

It localises to the cytoplasm. Its subcellular location is the cell membrane. It is found in the endoplasmic reticulum membrane. It carries out the reaction a 1,2-diacyl-sn-glycero-3-phospho-L-serine(in) = a 1,2-diacyl-sn-glycero-3-phospho-L-serine(out). Ipid transport protein (LTP) involved in non-vesicular transfer of lipids between membranes. Functions in phosphoinositide-coupled directional transport of various lipids by carrying the lipid molecule in a hydrophobic pocket and transferring it between membranes through the cytosol. Involved in maintenance of intracellular sterol distribution and homeostasis. Involved in lipid countertransport between the endoplasmic reticulum and the plasma membrane. Specifically exchanges phosphatidylserine with phosphatidylinositol 4-phosphate (PI4P), delivering phosphatidylserine to the PM in exchange for PI4P, which is delivered to the ER-localized PI4P phosphatase SAC1 for degradation. Thus, by maintaining a PI4P gradient at the ER/PM interface, SAC1 drives PS transport. Binds phosphatidylserine and PI4P in a mutually exclusive manner. In Saccharomyces cerevisiae (strain ATCC 204508 / S288c) (Baker's yeast), this protein is Oxysterol-binding protein homolog 7.